A 68-amino-acid polypeptide reads, in one-letter code: Large ribosomal subunit protein uL30 (68 aa).

It belongs to the universal ribosomal protein uL30 family. In terms of assembly, part of the 50S ribosomal subunit.

This is Large ribosomal subunit protein uL30 from Bartonella henselae (strain ATCC 49882 / DSM 28221 / CCUG 30454 / Houston 1) (Rochalimaea henselae).